A 1133-amino-acid chain; its full sequence is DNA repair protein rad8 (1133 aa).

Disordered stretches follow at residues 1–34 (MKRK…SKPN) and 392–413 (PEAR…EEDV). Serine 18 bears the Phosphoserine mark. A Helicase ATP-binding domain is found at 516 to 705 (PNSMPYHRGG…YSLIKFMRYE (190 aa)). 529–536 (DEMGLGKT) contributes to the ATP binding site. A DEGH box motif is present at residues 656–659 (DEGH). The segment at 877-923 (CPICCNEPIQNPLLLNCKHACCGDCLSEHIQYQKRRNIIPPLCHTCR) adopts an RING-type zinc-finger fold. Positions 971–1125 (QLRQLTHSSE…EGKQQVQSIE (155 aa)) constitute a Helicase C-terminal domain.

Belongs to the SNF2/RAD54 helicase family.

It is found in the cytoplasm. Its subcellular location is the nucleus. Functionally, probable helicase, member of the UBC2/RAD6 epistasis group. Functions with DNA repair protein rad18 in error-free postreplication DNA repair. Involved in the maintenance of wild-type rates of instability of simple repetitive sequences such as poly(GT) repeats. Plays a role in surviving topoisomerase-mediated DNA damage. This Schizosaccharomyces pombe (strain 972 / ATCC 24843) (Fission yeast) protein is DNA repair protein rad8.